The primary structure comprises 110 residues: Nucleoid-associated protein KPN78578_04440 (110 aa).

Belongs to the YbaB/EbfC family. Homodimer.

The protein localises to the cytoplasm. The protein resides in the nucleoid. Functionally, binds to DNA and alters its conformation. May be involved in regulation of gene expression, nucleoid organization and DNA protection. This is Nucleoid-associated protein KPN78578_04440 from Klebsiella pneumoniae subsp. pneumoniae (strain ATCC 700721 / MGH 78578).